A 307-amino-acid polypeptide reads, in one-letter code: Oxygen-dependent coproporphyrinogen-III oxidase (307 aa).

S99 contacts substrate. Residues H103 and H113 each contribute to the a divalent metal cation site. The active-site Proton donor is the H113. 115-117 (NVR) serves as a coordination point for substrate. 2 residues coordinate a divalent metal cation: H152 and H182. An important for dimerization region spans residues 247–282 (YVEFNLVFDRGTLFGLQSGGRTESILMSMPPVANWR). Residue 265 to 267 (GGR) coordinates substrate.

Belongs to the aerobic coproporphyrinogen-III oxidase family. In terms of assembly, homodimer. A divalent metal cation serves as cofactor.

The protein resides in the cytoplasm. It carries out the reaction coproporphyrinogen III + O2 + 2 H(+) = protoporphyrinogen IX + 2 CO2 + 2 H2O. It functions in the pathway porphyrin-containing compound metabolism; protoporphyrin-IX biosynthesis; protoporphyrinogen-IX from coproporphyrinogen-III (O2 route): step 1/1. Involved in the heme biosynthesis. Catalyzes the aerobic oxidative decarboxylation of propionate groups of rings A and B of coproporphyrinogen-III to yield the vinyl groups in protoporphyrinogen-IX. This chain is Oxygen-dependent coproporphyrinogen-III oxidase, found in Burkholderia lata (strain ATCC 17760 / DSM 23089 / LMG 22485 / NCIMB 9086 / R18194 / 383).